Consider the following 195-residue polypeptide: Imidazoleglycerol-phosphate dehydratase (195 aa).

Belongs to the imidazoleglycerol-phosphate dehydratase family.

The protein localises to the cytoplasm. The catalysed reaction is D-erythro-1-(imidazol-4-yl)glycerol 3-phosphate = 3-(imidazol-4-yl)-2-oxopropyl phosphate + H2O. Its pathway is amino-acid biosynthesis; L-histidine biosynthesis; L-histidine from 5-phospho-alpha-D-ribose 1-diphosphate: step 6/9. The protein is Imidazoleglycerol-phosphate dehydratase of Campylobacter curvus (strain 525.92).